The following is a 676-amino-acid chain: Envelope glycoprotein (676 aa).

A signal peptide spans 1 to 32; the sequence is MEGLSLLQLPRDKFRKSSFFVWVIILFQKAFS. The Extracellular segment spans residues 33-650; that stretch reads MPLGVVTNST…DDNWWTGWRQ (618 aa). The N-linked (GlcNAc...) asparagine; by host glycan is linked to asparagine 40. Cystine bridges form between cysteine 53-cysteine 609, cysteine 108-cysteine 135, cysteine 121-cysteine 147, cysteine 511-cysteine 556, and cysteine 601-cysteine 608. The segment at 54–201 is receptor-binding; it reads KDHLASTDQL…TFLQSPPIRE (148 aa). 7 N-linked (GlcNAc...) asparagine; by host glycosylation sites follow: asparagine 204, asparagine 208, asparagine 238, asparagine 257, asparagine 268, asparagine 296, and asparagine 314. Residues 305–485 are mucin-like region; sequence ELSFETLSLN…STSNGLITST (181 aa). Residues 313 to 351 are disordered; it reads LNETEDDDATSSRTTKGRISDRATRKYSDLVPKDSPGMV. Over residues 330 to 344 the composition is skewed to basic and acidic residues; it reads RISDRATRKYSDLVP. Asparagine 366 carries an N-linked (GlcNAc...) asparagine; by host glycan. Residues 406–458 are disordered; that stretch reads SSSQILSSSPTMAPSPETQTSTTYTPKLPVMTTEESTTPPRNSPGSTTEAPTL. 2 stretches are compositionally biased toward polar residues: residues 415 to 430 and 438 to 458; these read PTMA…TTYT and TEES…APTL. Residue asparagine 463 is glycosylated (N-linked (GlcNAc...) asparagine; by host). The segment at 524-539 is fusion peptide; it reads HNAAGIAWIPYFGPGA. Residues 554-595 are a coiled coil; that stretch reads LVCGLRQLANETTQALQLFLRATTELRTYTILNRKAIDFLLR. N-linked (GlcNAc...) asparagine; by host glycosylation occurs at asparagine 563. The stretch at 615-634 forms a coiled coil; sequence WTKNITDKINQIIHDFIDNP. Asparagine 618 carries an N-linked (GlcNAc...) asparagine; by host glycan. The helical transmembrane segment at 651–671 threads the bilayer; sequence WIPAGIGITGIIIAIIALLCV. S-palmitoyl cysteine; by host attachment occurs at residues cysteine 670 and cysteine 672. At 672–676 the chain is on the cytoplasmic side; that stretch reads CKLLC.

The protein belongs to the filoviruses glycoprotein family. Homotrimer; each monomer consists of a GP1 and a GP2 subunit linked by disulfide bonds. The resulting peplomers (GP1,2) protrude from the virus surface as spikes. Interacts with host integrin alpha-V/ITGAV. Interacts with host CLEC10A. Binds also to host CD209 and CLEC4M/DC-SIGN(R). Interacts with host FOLR1. Interacts with BST2; this interaction inhibits the antiviral effect of BST2 and this allows viral release from infected cells. Interacts with host FCN1; this interaction enhances viral entry. Interacts with host TLR4; this interaction induces cell death in T-lymphocytes or proinflammatory cytokines and SOCS1 production in monocytes. In terms of assembly, interacts with host entry receptor NPC1. As to quaternary structure, GP1 and GP2delta are part of GP1,2delta soluble complexes released by ectodomain shedding. Post-translationally, the signal peptide region modulates GP's high mannose glycosylation, thereby determining the efficiency of the interactions with DC-SIGN(R). N-glycosylated. In terms of processing, O-glycosylated in the mucin-like region. Post-translationally, palmitoylation of GP2 is not required for its function. Specific enzymatic cleavages in vivo yield mature proteins. The precursor is processed into GP1 and GP2 by host cell furin in the trans Golgi, and maybe by other host proteases, to yield the mature GP1 and GP2 proteins. The cleavage site corresponds to the furin optimal cleavage sequence [KR]-X-[KR]-R. This cleavage does not seem to be required for function. After the internalization of the virus into cell endosomes, GP1 C-terminus is removed by the endosomal proteases cathepsin B, cathepsin L, or both, leaving a 19-kDa N-terminal fragment which is further digested by cathepsin B. Proteolytic processing of GP1,2 by host ADAM17 can remove the transmembrane anchor of GP2 and leads to shedding of complexes consisting in GP1 and truncated GP2 (GP1,2delta).

The protein resides in the virion membrane. It localises to the host cell membrane. Its subcellular location is the secreted. Its function is as follows. Trimeric GP1,2 complexes form the virion surface spikes and mediate the viral entry processes, with GP1 acting as the receptor-binding subunit and GP2 as the membrane fusion subunit. At later times of infection, down-regulates the expression of various host cell surface molecules that are essential for immune surveillance and cell adhesion. Down-modulates several integrins including ITGA1, ITGA2, ITGA3, ITGA4, ITGA5, ITGA6, ITGAV and ITGB1. This decrease in cell adhesion molecules may lead to cell detachment, contributing to the disruption of blood vessel integrity and hemorrhages developed during infection (cytotoxicity). Interacts with host TLR4 and thereby stimulates the differentiation and activation of monocytes leading to bystander death of T-lymphocytes. Down-regulates as well the function of host natural killer cells. Counteracts the antiviral effect of host BST2/tetherin that restricts release of progeny virions from infected cells. However, cooperates with VP40 and host BST2 to activate canonical NF-kappa-B pathway in a manner dependent on neddylation. Functions as a decoy for anti-GP1,2 antibodies thereby contributing to viral immune evasion. Interacts and activates host macrophages and dendritic cells inducing up-regulation of cytokine transcription. This effect is mediated throught activation of host TLR4. In terms of biological role, responsible for binding to the receptor(s) on target cells. Interacts with CD209/DC-SIGN and CLEC4M/DC-SIGNR which act as cofactors for virus entry into dendritic cells (DCs) and endothelial cells. Binding to the macrophage specific lectin CLEC10A also seem to enhance virus infectivity. Interaction with FOLR1/folate receptor alpha may be a cofactor for virus entry in some cell types, although results are contradictory. Members of the Tyro3 receptor tyrosine kinase family also seem to be cell entry factors in filovirus infection. Once attached, the virions are internalized through clathrin-dependent endocytosis and/or macropinocytosis. After internalization of the virus into the endosomes of the host cell, proteolysis of GP1 by two cysteine proteases, CTSB/cathepsin B and CTSL/cathepsin L removes the glycan cap and allows GP1 binding to the host entry receptor NPC1. NPC1-binding, Ca(2+) and acidic pH induce a conformational change of GP2, which unmasks its fusion peptide and permit membranes fusion. Functionally, acts as a class I viral fusion protein. Under the current model, the protein has at least 3 conformational states: pre-fusion native state, pre-hairpin intermediate state, and post-fusion hairpin state. During viral and target cell membrane fusion, the coiled coil regions (heptad repeats) assume a trimer-of-hairpins structure, positioning the fusion peptide in close proximity to the C-terminal region of the ectodomain. The formation of this structure appears to drive apposition and subsequent fusion of viral and target cell membranes. Responsible for penetration of the virus into the cell cytoplasm by mediating the fusion of the membrane of the endocytosed virus particle with the endosomal membrane. Low pH in endosomes induces an irreversible conformational change in GP2, releasing the fusion hydrophobic peptide. The protein is Envelope glycoprotein (GP) of Epomops franqueti (Franquet's epauletted fruit bat).